Consider the following 714-residue polypeptide: Sodium-dependent acetylcholine transporter (714 aa).

The disordered stretch occupies residues 1–21 (MSVSSNDPEQRNGRGMASGNN). At 1–74 (MSVSSNDPEQ…GNWSNKSDYL (74 aa)) the chain is on the cytoplasmic side. 3 consecutive transmembrane segments (helical) span residues 75-95 (LAVI…FLVF), 100-120 (AAFL…MFFM), and 152-172 (ISGF…FYLI). Over 173–257 (NSFSFSIPWS…LSKGVDDFGT (85 aa)) the chain is Extracellular. N-linked (GlcNAc...) asparagine glycosylation is found at asparagine 192, asparagine 205, asparagine 211, and asparagine 222. The next 9 helical transmembrane spans lie at 258–278 (LNWY…LCLF), 287–307 (VVYV…TRLL), 336–356 (AAVQ…TIAS), 368–388 (IWLV…LTFS), 422–442 (AGVS…LLVV), 476–496 (VCAL…LFWM), 502–522 (FVLT…INWV), 548–568 (ILFK…LWLD), and 584–604 (ILTA…VGIW). Residues 605–714 (QFCIAKGTIT…IPKFERETAI (110 aa)) are Cytoplasmic-facing.

Belongs to the sodium:neurotransmitter symporter (SNF) (TC 2.A.22) family. Interacts with stn-1; part of the DGC. Body wall, and vulval and enteric muscles.

It is found in the cell membrane. Its subcellular location is the postsynaptic cell membrane. In terms of biological role, mediates sodium-dependent uptake of acetylcholine at neuromuscular junctions during periods of increased synaptic activity, may also prevent spillover to adjacent synaptic sites. Not involved in the uptake of other neurotransmitters (GABA, glycine, proline and glutamate) and there was also no inhibition of uptake by adding an excess of other candidate substrates (GABA, glycine, taurine, creatine, proline, alanine, carnitine, glutamate and betaine). Required for muscle integrity; altered transport of acetylcholine due to loss of dystrophin-glycoprotein complex (DGC) function results in muscle degeneration. This is Sodium-dependent acetylcholine transporter from Caenorhabditis elegans.